Consider the following 122-residue polypeptide: Holo-[acyl-carrier-protein] synthase (122 aa).

Positions 8 and 57 each coordinate Mg(2+).

Belongs to the P-Pant transferase superfamily. AcpS family. Requires Mg(2+) as cofactor.

The protein resides in the cytoplasm. The catalysed reaction is apo-[ACP] + CoA = holo-[ACP] + adenosine 3',5'-bisphosphate + H(+). Functionally, transfers the 4'-phosphopantetheine moiety from coenzyme A to a Ser of acyl-carrier-protein. In Exiguobacterium sp. (strain ATCC BAA-1283 / AT1b), this protein is Holo-[acyl-carrier-protein] synthase.